A 392-amino-acid chain; its full sequence is Bifunctional enzyme IspD/IspF (392 aa).

2-C-methyl-D-erythritol 4-phosphate cytidylyltransferase stretches follow at residues 1–234 (MTES…MMRT) and 1–235 (MTES…MRTA). The 2-C-methyl-D-erythritol 2,4-cyclodiphosphate synthase stretch occupies residues 235 to 392 (AVGMGYDVHR…AVATIQLPET (158 aa)). A divalent metal cation is bound by residues D241 and H243. 4-CDP-2-C-methyl-D-erythritol 2-phosphate-binding positions include 241–243 (DVH) and 267–268 (HS). H275 contributes to the a divalent metal cation binding site. 4-CDP-2-C-methyl-D-erythritol 2-phosphate contacts are provided by residues 289–291 (DIG), 365–368 (TTTE), F372, and R375.

It in the N-terminal section; belongs to the IspD/TarI cytidylyltransferase family. IspD subfamily. The protein in the C-terminal section; belongs to the IspF family. It depends on a divalent metal cation as a cofactor.

The enzyme catalyses 2-C-methyl-D-erythritol 4-phosphate + CTP + H(+) = 4-CDP-2-C-methyl-D-erythritol + diphosphate. The catalysed reaction is 4-CDP-2-C-methyl-D-erythritol 2-phosphate = 2-C-methyl-D-erythritol 2,4-cyclic diphosphate + CMP. It functions in the pathway isoprenoid biosynthesis; isopentenyl diphosphate biosynthesis via DXP pathway; isopentenyl diphosphate from 1-deoxy-D-xylulose 5-phosphate: step 2/6. Its pathway is isoprenoid biosynthesis; isopentenyl diphosphate biosynthesis via DXP pathway; isopentenyl diphosphate from 1-deoxy-D-xylulose 5-phosphate: step 4/6. Bifunctional enzyme that catalyzes the formation of 4-diphosphocytidyl-2-C-methyl-D-erythritol from CTP and 2-C-methyl-D-erythritol 4-phosphate (MEP) (IspD), and catalyzes the conversion of 4-diphosphocytidyl-2-C-methyl-D-erythritol 2-phosphate (CDP-ME2P) to 2-C-methyl-D-erythritol 2,4-cyclodiphosphate (ME-CPP) with a corresponding release of cytidine 5-monophosphate (CMP) (IspF). This is Bifunctional enzyme IspD/IspF from Sphingopyxis alaskensis (strain DSM 13593 / LMG 18877 / RB2256) (Sphingomonas alaskensis).